Reading from the N-terminus, the 355-residue chain is Anthocyanin synthase (355 aa).

2 residues coordinate substrate: tyrosine 145 and lysine 216. Residues 211 to 310 (LLLQMKINYY…RISWAVFCEP (100 aa)) form the Fe2OG dioxygenase domain. 218–220 (NYY) serves as a coordination point for 2-oxoglutarate. A Fe cation-binding site is contributed by histidine 235. Substrate is bound at residue threonine 236. Positions 237 and 291 each coordinate Fe cation. Residues arginine 301 and 301–303 (RIS) contribute to the 2-oxoglutarate site. 2 residues coordinate substrate: glutamate 309 and lysine 344.

Belongs to the iron/ascorbate-dependent oxidoreductase family. The cofactor is L-ascorbate. Fe(2+) serves as cofactor. Expressed in stems and leaves. Expressed at low levels in ovaries.

It catalyses the reaction a (2R,3S,4S)-leucoanthocyanidin + 2-oxoglutarate + O2 = a 4-H-anthocyanidin with a 3-hydroxy group + succinate + CO2 + 2 H2O. The protein operates within pigment biosynthesis; anthocyanin biosynthesis. Its function is as follows. Involved in anthocyanin biosynthesis by catalyzing the oxidation of leucoanthocyanidins into anthocyanidins. Required for the accumulation of anthocyanin in red-fleshed kiwifruit varieties. The polypeptide is Anthocyanin synthase (Actinidia chinensis var. chinensis (Chinese soft-hair kiwi)).